The following is a 428-amino-acid chain: Enolase (428 aa).

Residue Gln163 participates in (2R)-2-phosphoglycerate binding. Residue Glu205 is the Proton donor of the active site. 3 residues coordinate Mg(2+): Asp242, Glu286, and Asp313. Residues Lys338, Arg367, Ser368, and Lys389 each coordinate (2R)-2-phosphoglycerate. The Proton acceptor role is filled by Lys338.

The protein belongs to the enolase family. Requires Mg(2+) as cofactor.

It localises to the cytoplasm. It is found in the secreted. The protein resides in the cell surface. The catalysed reaction is (2R)-2-phosphoglycerate = phosphoenolpyruvate + H2O. It participates in carbohydrate degradation; glycolysis; pyruvate from D-glyceraldehyde 3-phosphate: step 4/5. Its function is as follows. Catalyzes the reversible conversion of 2-phosphoglycerate (2-PG) into phosphoenolpyruvate (PEP). It is essential for the degradation of carbohydrates via glycolysis. In Syntrophus aciditrophicus (strain SB), this protein is Enolase.